A 78-amino-acid chain; its full sequence is Large ribosomal subunit protein uL24 (78 aa).

Belongs to the universal ribosomal protein uL24 family. In terms of assembly, part of the 50S ribosomal subunit.

In terms of biological role, one of two assembly initiator proteins, it binds directly to the 5'-end of the 23S rRNA, where it nucleates assembly of the 50S subunit. Functionally, one of the proteins that surrounds the polypeptide exit tunnel on the outside of the subunit. The polypeptide is Large ribosomal subunit protein uL24 (Helicobacter hepaticus (strain ATCC 51449 / 3B1)).